The following is a 301-amino-acid chain: PWI domain-containing protein C825.05c (301 aa).

The region spanning 26–137 (STKFPASYDT…YGIPEKFILE (112 aa)) is the PWI domain. S86 is subject to Phosphoserine. 3 stretches are compositionally biased toward basic and acidic residues: residues 145 to 182 (LKDR…ERNG), 189 to 205 (TLDR…ERNR), and 215 to 229 (RFSE…DIRS). The disordered stretch occupies residues 145–301 (LKDRTEASKE…ESDSGTQKHD (157 aa)). S199 is subject to Phosphoserine. Residues 244 to 253 (PTRRRERHYR) show a composition bias toward basic residues. The span at 254–289 (TRDDEGFDEFGRSRDGRWRESRTSYREKHRYDRDAL) shows a compositional bias: basic and acidic residues. Residues 290–301 (SSESDSGTQKHD) show a composition bias toward polar residues. S291 is modified (phosphoserine).

The protein localises to the nucleus. In Schizosaccharomyces pombe (strain 972 / ATCC 24843) (Fission yeast), this protein is PWI domain-containing protein C825.05c.